Consider the following 97-residue polypeptide: Putative pterin-4-alpha-carbinolamine dehydratase (97 aa).

Belongs to the pterin-4-alpha-carbinolamine dehydratase family.

The catalysed reaction is (4aS,6R)-4a-hydroxy-L-erythro-5,6,7,8-tetrahydrobiopterin = (6R)-L-erythro-6,7-dihydrobiopterin + H2O. This is Putative pterin-4-alpha-carbinolamine dehydratase from Opitutus terrae (strain DSM 11246 / JCM 15787 / PB90-1).